The sequence spans 160 residues: Large ribosomal subunit protein eL21A (160 aa).

Lysine 32 is covalently cross-linked (Glycyl lysine isopeptide (Lys-Gly) (interchain with G-Cter in ubiquitin)).

Belongs to the eukaryotic ribosomal protein eL21 family. Component of the large ribosomal subunit (LSU). Mature yeast ribosomes consist of a small (40S) and a large (60S) subunit. The 40S small subunit contains 1 molecule of ribosomal RNA (18S rRNA) and 33 different proteins (encoded by 57 genes). The large 60S subunit contains 3 rRNA molecules (25S, 5.8S and 5S rRNA) and 46 different proteins (encoded by 81 genes).

It is found in the cytoplasm. Component of the ribosome, a large ribonucleoprotein complex responsible for the synthesis of proteins in the cell. The small ribosomal subunit (SSU) binds messenger RNAs (mRNAs) and translates the encoded message by selecting cognate aminoacyl-transfer RNA (tRNA) molecules. The large subunit (LSU) contains the ribosomal catalytic site termed the peptidyl transferase center (PTC), which catalyzes the formation of peptide bonds, thereby polymerizing the amino acids delivered by tRNAs into a polypeptide chain. The nascent polypeptides leave the ribosome through a tunnel in the LSU and interact with protein factors that function in enzymatic processing, targeting, and the membrane insertion of nascent chains at the exit of the ribosomal tunnel. In Saccharomyces cerevisiae (strain ATCC 204508 / S288c) (Baker's yeast), this protein is Large ribosomal subunit protein eL21A.